We begin with the raw amino-acid sequence, 74 residues long: Acyl carrier protein (74 aa).

The region spanning 1–73 (MAVFEKVQEI…DLVAYVEEKS (73 aa)) is the Carrier domain. Position 35 is an O-(pantetheine 4'-phosphoryl)serine (Ser-35).

It belongs to the acyl carrier protein (ACP) family. Post-translationally, 4'-phosphopantetheine is transferred from CoA to a specific serine of apo-ACP by AcpS. This modification is essential for activity because fatty acids are bound in thioester linkage to the sulfhydryl of the prosthetic group.

Its subcellular location is the cytoplasm. The protein operates within lipid metabolism; fatty acid biosynthesis. In terms of biological role, carrier of the growing fatty acid chain in fatty acid biosynthesis. The sequence is that of Acyl carrier protein from Streptococcus pyogenes serotype M1.